The chain runs to 137 residues: Ribosome-binding factor A (137 aa).

It belongs to the RbfA family. As to quaternary structure, monomer. Binds 30S ribosomal subunits, but not 50S ribosomal subunits or 70S ribosomes.

The protein localises to the cytoplasm. In terms of biological role, one of several proteins that assist in the late maturation steps of the functional core of the 30S ribosomal subunit. Associates with free 30S ribosomal subunits (but not with 30S subunits that are part of 70S ribosomes or polysomes). Required for efficient processing of 16S rRNA. May interact with the 5'-terminal helix region of 16S rRNA. In Rhodopseudomonas palustris (strain BisB18), this protein is Ribosome-binding factor A.